Reading from the N-terminus, the 193-residue chain is Thymidine kinase (193 aa).

Residues 14-21 (GCMFSGKT) and 87-90 (DELH) each bind ATP. Glutamate 88 serves as the catalytic Proton acceptor. Positions 147, 150, 185, and 188 each coordinate Zn(2+).

This sequence belongs to the thymidine kinase family. As to quaternary structure, homotetramer.

It is found in the cytoplasm. It catalyses the reaction thymidine + ATP = dTMP + ADP + H(+). The sequence is that of Thymidine kinase from Roseiflexus sp. (strain RS-1).